A 241-amino-acid chain; its full sequence is MADNKANKEQVHRVFQNISKKYDRLNNIISFEQHKVWRKRVMKDMGVRKGMKALDVCCGTGDWTIALSKAVGSTGEVTGIDFSENMLEVGKEKTASMENVKLVHGDAMELPFEDNSFDYVTIGFGLRNVPDYLVALKEMNRVLKPGGMVVCLETSQPTLPVFKQMYALYFKFVMPIFGKLFAKSKEEYEWLQQSTFNFPGKEELKRMFEEADFINVRVRSFTGGVAAMHLGYKEKDNTKGD.

S-adenosyl-L-methionine is bound by residues Thr-60, Asp-81, and 106–107; that span reads DA.

This sequence belongs to the class I-like SAM-binding methyltransferase superfamily. MenG/UbiE family.

The enzyme catalyses a 2-demethylmenaquinol + S-adenosyl-L-methionine = a menaquinol + S-adenosyl-L-homocysteine + H(+). The protein operates within quinol/quinone metabolism; menaquinone biosynthesis; menaquinol from 1,4-dihydroxy-2-naphthoate: step 2/2. In terms of biological role, methyltransferase required for the conversion of demethylmenaquinol (DMKH2) to menaquinol (MKH2). This Staphylococcus aureus (strain MRSA252) protein is Demethylmenaquinone methyltransferase.